We begin with the raw amino-acid sequence, 54 residues long: uncharacterized protein (54 aa).

Residues 1 to 54 (MSKKSTPMTKDAASRIQSSAAKSGGDVSSGSFASRAQSAAAINANNTSNSTGKK) form a disordered region. The span at 28 to 54 (SSGSFASRAQSAAAINANNTSNSTGKK) shows a compositional bias: low complexity.

This is an uncharacterized protein from Dictyostelium discoideum (Social amoeba).